We begin with the raw amino-acid sequence, 128 residues long: Insoluble matrix shell protein 3 (128 aa).

A signal peptide spans 1–19 (MLMLLCIIATVIPFSLVEG).

Component of the acid-insoluble organic matrix of the calcified shell.

The protein resides in the secreted. This chain is Insoluble matrix shell protein 3, found in Ruditapes philippinarum (Japanese carpet shell).